The primary structure comprises 171 residues: Co-chaperone protein HscB (171 aa).

Residues 2-74 (DYFTLFGLPA…LTRAEYLLSL (73 aa)) form the J domain.

This sequence belongs to the HscB family. As to quaternary structure, interacts with HscA and stimulates its ATPase activity. Interacts with IscU.

In terms of biological role, co-chaperone involved in the maturation of iron-sulfur cluster-containing proteins. Seems to help targeting proteins to be folded toward HscA. The chain is Co-chaperone protein HscB from Klebsiella pneumoniae (strain 342).